A 242-amino-acid chain; its full sequence is Anamorsin homolog (242 aa).

Positions methionine 1–leucine 140 are N-terminal SAM-like domain. The interval leucine 140–alanine 159 is disordered. Positions serine 141–asparagine 162 are linker. The segment covering glutamate 148–alanine 159 has biased composition (basic and acidic residues). 4 residues coordinate [4Fe-4S] cluster: cysteine 205, cysteine 208, cysteine 216, and cysteine 219. Short sequence motifs (cx2C motif) lie at residues cysteine 205 to cysteine 208 and cysteine 216 to cysteine 219. The tract at residues cysteine 205–cysteine 219 is fe-S binding site B.

It belongs to the anamorsin family. Monomer. [4Fe-4S] cluster serves as cofactor.

The protein resides in the cytoplasm. Its subcellular location is the mitochondrion intermembrane space. Functionally, component of the cytosolic iron-sulfur (Fe-S) protein assembly (CIA) machinery. Required for the maturation of extramitochondrial Fe-S proteins. Part of an electron transfer chain functioning in an early step of cytosolic Fe-S biogenesis, facilitating the de novo assembly of a [4Fe-4S] cluster on the cytosolic Fe-S scaffold complex. Electrons are transferred from NADPH via a FAD- and FMN-containing diflavin oxidoreductase. Together with the diflavin oxidoreductase, also required for the assembly of the diferric tyrosyl radical cofactor of ribonucleotide reductase (RNR), probably by providing electrons for reduction during radical cofactor maturation in the catalytic small subunit. This is Anamorsin homolog from Plasmodium vivax (strain Salvador I).